Reading from the N-terminus, the 176-residue chain is NAD(P)H-quinone oxidoreductase subunit I, chloroplastic (176 aa).

2 consecutive 4Fe-4S ferredoxin-type domains span residues 55 to 84 and 95 to 124; these read GRIH…VDWE and LNYS…MTEE. Residues cysteine 64, cysteine 67, cysteine 70, cysteine 74, cysteine 104, cysteine 107, cysteine 110, and cysteine 114 each coordinate [4Fe-4S] cluster.

This sequence belongs to the complex I 23 kDa subunit family. NDH is composed of at least 16 different subunits, 5 of which are encoded in the nucleus. [4Fe-4S] cluster is required as a cofactor.

The protein resides in the plastid. It is found in the chloroplast thylakoid membrane. The enzyme catalyses a plastoquinone + NADH + (n+1) H(+)(in) = a plastoquinol + NAD(+) + n H(+)(out). It catalyses the reaction a plastoquinone + NADPH + (n+1) H(+)(in) = a plastoquinol + NADP(+) + n H(+)(out). Functionally, NDH shuttles electrons from NAD(P)H:plastoquinone, via FMN and iron-sulfur (Fe-S) centers, to quinones in the photosynthetic chain and possibly in a chloroplast respiratory chain. The immediate electron acceptor for the enzyme in this species is believed to be plastoquinone. Couples the redox reaction to proton translocation, and thus conserves the redox energy in a proton gradient. This chain is NAD(P)H-quinone oxidoreductase subunit I, chloroplastic, found in Populus alba (White poplar).